A 108-amino-acid polypeptide reads, in one-letter code: Large ribosomal subunit protein uL23 (108 aa).

This sequence belongs to the universal ribosomal protein uL23 family. Part of the 50S ribosomal subunit. Contacts protein L29, and trigger factor when it is bound to the ribosome.

One of the early assembly proteins it binds 23S rRNA. One of the proteins that surrounds the polypeptide exit tunnel on the outside of the ribosome. Forms the main docking site for trigger factor binding to the ribosome. The chain is Large ribosomal subunit protein uL23 from Albidiferax ferrireducens (strain ATCC BAA-621 / DSM 15236 / T118) (Rhodoferax ferrireducens).